Reading from the N-terminus, the 986-residue chain is Mediator of RNA polymerase II transcription subunit 24 (986 aa).

6 consecutive short sequence motifs (LXXLL motif) follow at residues L128 to L132, L341 to L345, L445 to L449, L554 to L558, L785 to L789, and L855 to L859.

It belongs to the Mediator complex subunit 24 family. In terms of assembly, component of the Mediator complex.

Its subcellular location is the nucleus. In terms of biological role, component of the Mediator complex, a coactivator involved in the regulated transcription of nearly all RNA polymerase II-dependent genes. Mediator functions as a bridge to convey information from gene-specific regulatory proteins to the basal RNA polymerase II transcription machinery. Mediator is recruited to promoters by direct interactions with regulatory proteins and serves as a scaffold for the assembly of a functional preinitiation complex with RNA polymerase II and the general transcription factors. The protein is Mediator of RNA polymerase II transcription subunit 24 (MED24) of Gallus gallus (Chicken).